Here is a 346-residue protein sequence, read N- to C-terminus: Dihydroorotase (346 aa).

Residues His13 and His15 each contribute to the Zn(2+) site. Residues 15–17 and Asn41 each bind substrate; that span reads HLR. Zn(2+) contacts are provided by Lys99, His136, and His174. Lys99 bears the N6-carboxylysine mark. A substrate-binding site is contributed by His136. Leu219 is a substrate binding site. Asp247 contacts Zn(2+). Residue Asp247 is part of the active site. Substrate-binding residues include His251 and Ala263.

It belongs to the metallo-dependent hydrolases superfamily. DHOase family. Class II DHOase subfamily. Homodimer. It depends on Zn(2+) as a cofactor.

It carries out the reaction (S)-dihydroorotate + H2O = N-carbamoyl-L-aspartate + H(+). It functions in the pathway pyrimidine metabolism; UMP biosynthesis via de novo pathway; (S)-dihydroorotate from bicarbonate: step 3/3. In terms of biological role, catalyzes the reversible cyclization of carbamoyl aspartate to dihydroorotate. This chain is Dihydroorotase, found in Chelativorans sp. (strain BNC1).